The sequence spans 418 residues: AP-3 complex subunit mu-1 (418 aa).

In terms of domain architecture, MHD spans 176-417 (NNEAYFDVVE…ITKAGKFQVR (242 aa)).

The protein belongs to the adaptor complexes medium subunit family. In terms of assembly, adaptor protein complex 3 (AP-3) is a heterotetramer composed of two large adaptins (delta-type subunit AP3D1 and beta-type subunit AP3B1 or AP3B2), a medium adaptin (mu-type subunit AP3M1 or AP3M2) and a small adaptin (sigma-type subunit APS1 or AP3S2). Interacts with AGAP1. AP-3 associates with the BLOC-1 complex.

Its subcellular location is the golgi apparatus. It localises to the cytoplasmic vesicle membrane. Functionally, part of the AP-3 complex, an adaptor-related complex which is not clathrin-associated. The complex is associated with the Golgi region as well as more peripheral structures. It facilitates the budding of vesicles from the Golgi membrane and may be directly involved in trafficking to lysosomes. In concert with the BLOC-1 complex, AP-3 is required to target cargos into vesicles assembled at cell bodies for delivery into neurites and nerve terminals. The polypeptide is AP-3 complex subunit mu-1 (Ap3m1) (Rattus norvegicus (Rat)).